Here is a 246-residue protein sequence, read N- to C-terminus: tRNA (guanine-N(7)-)-methyltransferase (246 aa).

Positions 77, 102, 129, and 152 each coordinate S-adenosyl-L-methionine. D152 is an active-site residue. Substrate contacts are provided by residues K156, D188, and 225-228; that span reads TKFE.

It belongs to the class I-like SAM-binding methyltransferase superfamily. TrmB family.

It carries out the reaction guanosine(46) in tRNA + S-adenosyl-L-methionine = N(7)-methylguanosine(46) in tRNA + S-adenosyl-L-homocysteine. It participates in tRNA modification; N(7)-methylguanine-tRNA biosynthesis. In terms of biological role, catalyzes the formation of N(7)-methylguanine at position 46 (m7G46) in tRNA. In Haemophilus influenzae (strain PittEE), this protein is tRNA (guanine-N(7)-)-methyltransferase.